A 180-amino-acid polypeptide reads, in one-letter code: Ribosome-recycling factor (180 aa).

The tract at residues 135–156 (SDLKKDNDLSEDSRHRTEDDIQ) is disordered.

This sequence belongs to the RRF family.

It is found in the cytoplasm. Its function is as follows. Responsible for the release of ribosomes from messenger RNA at the termination of protein biosynthesis. May increase the efficiency of translation by recycling ribosomes from one round of translation to another. The protein is Ribosome-recycling factor of Oenococcus oeni (strain ATCC BAA-331 / PSU-1).